The sequence spans 233 residues: MKSLLGTKVGMTQVFTETGKAVAATVIYVEPNKVLAVKTNEKDGYSAIQIGYETVKEKALNKPLLGQFKKANSDPKRHIKEFRDVVAEVGAELTVSEFEPGQLVNAQAYTKGHGFTGSIKRHNFSMGPMGHGAGYPHRYVGSIAKGRGGSQAQRVFKGTKLPGHYGHELVTTKNLLVLDVKANENLILIKGAIPGPKGSIVLLKSAKKVGHIVSDPQVVNYLANKASSSEANE.

Belongs to the universal ribosomal protein uL3 family. In terms of assembly, part of the 50S ribosomal subunit. Forms a cluster with proteins L14 and L19.

In terms of biological role, one of the primary rRNA binding proteins, it binds directly near the 3'-end of the 23S rRNA, where it nucleates assembly of the 50S subunit. The polypeptide is Large ribosomal subunit protein uL3 (Ureaplasma parvum serovar 3 (strain ATCC 27815 / 27 / NCTC 11736)).